Reading from the N-terminus, the 598-residue chain is IQ calmodulin-binding motif-containing protein 1 (598 aa).

Positions 1 to 157 are interaction with BBS1, BBS8 and BBS9; the sequence is MKPTGTDPRI…SLFWLLGGHV (157 aa). An interaction with CEP290, BBS1, BBS2, BBS4, BBS5, BBS7, BBS8 and BBS9 region spans residues 287–598; sequence QEVEEQKLHQ…NLFIGGTKPP (312 aa). IQ domains are found at residues 294 to 317, 318 to 338, 387 to 416, and 417 to 437; these read LHQA…LKKL, PSAV…MLLE, EEKS…SLIE, and YKAA…CRKK. The stretch at 336 to 373 forms a coiled coil; that stretch reads LLEINRQKEEEDLKLQLQLQRQRAMRLSRELQLSMLEI. An interaction with BBS1, BBS2, BBS4, BBS7, BBS8 and BBS9 region spans residues 530 to 598; it reads AEGKEPELFL…NLFIGGTKPP (69 aa). The residue at position 572 (Ser-572) is a Phosphoserine.

Interacts with CEP290/NPHP6; IQCB1/NPHP5 and CEP290 are proposed to form a functional NPHP5-6 module/NPHP6; localized to the centrosome. Interacts with calmodulin, ATXN10. Interacts with NPHP1, INVS, NPHP4 and RPGRIP1L; these interactions likely require additional interactors. Associates with the BBSome complex; interacts with BBS1, BBS2, BBS4, BBS5, BBS7, BBS8 and BBS9. In terms of tissue distribution, ubiquitously expressed in fetal and adult tissues. Localized to the outer segments and connecting cilia of photoreceptor cells. Up-regulated in a number of primary colorectal and gastric tumors.

It is found in the cytoplasm. The protein resides in the cytoskeleton. Its subcellular location is the microtubule organizing center. The protein localises to the centrosome. It localises to the centriole. In terms of biological role, involved in ciliogenesis. The function in an early step in cilia formation depends on its association with CEP290/NPHP6. Involved in regulation of the BBSome complex integrity, specifically for presence of BBS2 and BBS5 in the complex, and in ciliary targeting of selected BBSome cargos. May play a role in controlling entry of the BBSome complex to cilia possibly implicating CEP290/NPHP6. This is IQ calmodulin-binding motif-containing protein 1 (IQCB1) from Homo sapiens (Human).